The following is a 285-amino-acid chain: Bifunctional protein FolD (285 aa).

Residues 165–167 and Ser190 each bind NADP(+); that span reads GRS.

Belongs to the tetrahydrofolate dehydrogenase/cyclohydrolase family. As to quaternary structure, homodimer.

It carries out the reaction (6R)-5,10-methylene-5,6,7,8-tetrahydrofolate + NADP(+) = (6R)-5,10-methenyltetrahydrofolate + NADPH. The catalysed reaction is (6R)-5,10-methenyltetrahydrofolate + H2O = (6R)-10-formyltetrahydrofolate + H(+). It functions in the pathway one-carbon metabolism; tetrahydrofolate interconversion. Functionally, catalyzes the oxidation of 5,10-methylenetetrahydrofolate to 5,10-methenyltetrahydrofolate and then the hydrolysis of 5,10-methenyltetrahydrofolate to 10-formyltetrahydrofolate. This is Bifunctional protein FolD from Ligilactobacillus salivarius (strain UCC118) (Lactobacillus salivarius).